The chain runs to 534 residues: Probable DNA polymerase epsilon subunit 2 (534 aa).

The protein belongs to the DNA polymerase epsilon subunit B family. In terms of assembly, consists of four subunits.

It localises to the nucleus. In terms of biological role, accessory component of the DNA polymerase epsilon complex. Participates in DNA repair and in chromosomal DNA replication. This chain is Probable DNA polymerase epsilon subunit 2 (pole-2), found in Caenorhabditis elegans.